A 179-amino-acid polypeptide reads, in one-letter code: Large ribosomal subunit protein uL6 (179 aa).

This sequence belongs to the universal ribosomal protein uL6 family. As to quaternary structure, part of the 50S ribosomal subunit.

Its function is as follows. This protein binds to the 23S rRNA, and is important in its secondary structure. It is located near the subunit interface in the base of the L7/L12 stalk, and near the tRNA binding site of the peptidyltransferase center. This Rhodococcus erythropolis (strain PR4 / NBRC 100887) protein is Large ribosomal subunit protein uL6.